The following is a 105-amino-acid chain: Chloroacetanilide N-alkylformylase 2, ferredoxin component (105 aa).

Residues 2 to 105 form the 2Fe-2S ferredoxin-type domain; it reads PKLVVVTREG…GLTVTIAPED (104 aa). [2Fe-2S] cluster-binding residues include Cys-40, Cys-46, Cys-49, and Cys-86.

Belongs to the adrenodoxin/putidaredoxin family. In terms of assembly, the chloroacetanilide N-alkylformylase multicomponent enzyme system is composed of an oxygenase component (CndA) and an electron transfer component formed by a ferredoxin reductase (CndC1) and a ferredoxin (CndB1). In vitro, chloroacetanilide N-alkylformylase assays in which CndB1 is substituted for CndB2 demonstrate that the two enzymes possess nearly identical activities. Requires [2Fe-2S] cluster as cofactor.

Component of the chloroacetanilide N-alkylformylase multicomponent enzyme system involved in the degradation of chloroacetanilide herbicides (N-alkoxyalkyl-N-chloroacetyl-substituted aniline derivatives). In vitro, functions as an intermediate electron transfer protein. The polypeptide is Chloroacetanilide N-alkylformylase 2, ferredoxin component (Rhizorhabdus wittichii (strain DC-6 / KACC 16600) (Sphingomonas wittichii)).